A 322-amino-acid polypeptide reads, in one-letter code: uncharacterized protein (322 aa).

2 disordered regions span residues 1 to 51 (MARS…GAWA) and 107 to 130 (QERQ…DRPD). Residues 119–130 (LHLEPGNEDRPD) are compositionally biased toward basic and acidic residues.

As to expression, expressed in skin and fetal lung.

This is an uncharacterized protein from Homo sapiens (Human).